A 133-amino-acid chain; its full sequence is Ribosome-binding factor A (133 aa).

It belongs to the RbfA family. As to quaternary structure, monomer. Binds 30S ribosomal subunits, but not 50S ribosomal subunits or 70S ribosomes.

Its subcellular location is the cytoplasm. In terms of biological role, one of several proteins that assist in the late maturation steps of the functional core of the 30S ribosomal subunit. Associates with free 30S ribosomal subunits (but not with 30S subunits that are part of 70S ribosomes or polysomes). Required for efficient processing of 16S rRNA. May interact with the 5'-terminal helix region of 16S rRNA. The sequence is that of Ribosome-binding factor A from Enterobacter sp. (strain 638).